The primary structure comprises 344 residues: Dihydroorotase (344 aa).

Zn(2+) contacts are provided by histidine 13 and histidine 15. Substrate contacts are provided by residues histidine 15–arginine 17 and asparagine 41. Residues lysine 98, histidine 135, and histidine 173 each coordinate Zn(2+). Position 98 is an N6-carboxylysine (lysine 98). Position 135 (histidine 135) interacts with substrate. Leucine 218 is a substrate binding site. Aspartate 246 serves as a coordination point for Zn(2+). Aspartate 246 is an active-site residue. Residues histidine 250 and alanine 262 each coordinate substrate.

Belongs to the metallo-dependent hydrolases superfamily. DHOase family. Class II DHOase subfamily. In terms of assembly, homodimer. It depends on Zn(2+) as a cofactor.

It catalyses the reaction (S)-dihydroorotate + H2O = N-carbamoyl-L-aspartate + H(+). The protein operates within pyrimidine metabolism; UMP biosynthesis via de novo pathway; (S)-dihydroorotate from bicarbonate: step 3/3. Functionally, catalyzes the reversible cyclization of carbamoyl aspartate to dihydroorotate. The chain is Dihydroorotase from Shewanella sediminis (strain HAW-EB3).